The chain runs to 157 residues: Thiocyanate hydrolase subunit beta (157 aa).

As to quaternary structure, heterododecamer consisting of 4 alpha, 4 beta, and 4 gamma subunits.

The enzyme catalyses thiocyanate + H2O + 2 H(+) = carbonyl sulfide + NH4(+). Its pathway is organosulfur degradation; thiocyanate degradation. In terms of biological role, involved in the degradation of thiocyanate. This Thiobacillus thioparus protein is Thiocyanate hydrolase subunit beta (scnB).